A 215-amino-acid polypeptide reads, in one-letter code: Ependymin-2 (215 aa).

Residues 1–20 (MHTVKLLCVVFSCLCAVAWA) form the signal peptide. Asn-71 and Asn-94 each carry an N-linked (GlcNAc...) asparagine glycan.

This sequence belongs to the ependymin family. Forms disulfide-linked dimers. In terms of processing, different glycosylation variants are known as EPD-beta and EPD-gamma. Post-translationally, binds calcium through the terminal sialic acids. EPDs are synthesized in the meninx and secreted in the cerebrospinal fluid.

Its subcellular location is the secreted. Functionally, may play a role in neural plasticity. May be involved during axon regeneration. The protein is Ependymin-2 (epd2) of Carassius auratus (Goldfish).